The chain runs to 576 residues: Arginine--tRNA ligase (576 aa).

Residues Ala-132–His-142 carry the 'HIGH' region motif.

This sequence belongs to the class-I aminoacyl-tRNA synthetase family. In terms of assembly, monomer.

Its subcellular location is the cytoplasm. It catalyses the reaction tRNA(Arg) + L-arginine + ATP = L-arginyl-tRNA(Arg) + AMP + diphosphate. The polypeptide is Arginine--tRNA ligase (Ehrlichia chaffeensis (strain ATCC CRL-10679 / Arkansas)).